A 233-amino-acid chain; its full sequence is LOB domain-containing protein 40 (233 aa).

In terms of domain architecture, LOB spans 3-109; that stretch reads MSCNGCRVLR…VEAVMRGSPV (107 aa). A compositionally biased stretch (basic and acidic residues) spans 143 to 160; that stretch reads KRRSRGACKEERNVRSLS. The tract at residues 143–183 is disordered; that stretch reads KRRSRGACKEERNVRSLSHESSLSHESPVSSEETTTEEPKT. The span at 161–175 shows a compositional bias: low complexity; the sequence is HESSLSHESPVSSEE.

This sequence belongs to the LOB domain-containing protein family. Expressed in roots and flowers.

This Arabidopsis thaliana (Mouse-ear cress) protein is LOB domain-containing protein 40 (LBD40).